A 157-amino-acid polypeptide reads, in one-letter code: Secreted effector protein See1 (157 aa).

An N-terminal signal peptide occupies residues 1-21 (MLFTTFVSLLLVILCLVHVSA). Residues 124–157 (SYRYGDSHGNSREAEYSVADHQSASGEYKFGPTT) are disordered. Basic and acidic residues predominate over residues 128–138 (GDSHGNSREAE).

Interacts with a maize homolog of SGT1, a factor acting in cell cycle progression in yeast Saccharomyces cerevisiae and an important component of plant and human innate immunity.

Its subcellular location is the secreted. The protein resides in the host cytoplasm. It is found in the host nucleus. Its function is as follows. Effector protein involved in the induction of tumors in infected plant tissues by the fungus. Required for the reactivation of plant DNA synthesis, which is crucial for tumor progression in leaf cells. Interferes with the MAPK-triggered phosphorylation of maize SGT1 at a monocot-specific phosphorylation site, resulting in both modulation of immune responses and reactivation of DNA synthesis during leaf tumor formation. This is Secreted effector protein See1 from Mycosarcoma maydis (Corn smut fungus).